The chain runs to 139 residues: Actin-depolymerizing factor 1 (139 aa).

Residues 5–139 enclose the ADF-H domain; sequence ASGMAVHDDC…GLDVIQSRAN (135 aa).

It belongs to the actin-binding proteins ADF family.

Its function is as follows. Actin-depolymerizing protein. Severs actin filaments (F-actin) and binds to actin monomers. This Petunia hybrida (Petunia) protein is Actin-depolymerizing factor 1 (ADF1).